The chain runs to 690 residues: Ectopic P granules protein 2 (690 aa).

Coiled coils occupy residues 20–181 (IELA…EREV), 359–409 (ELLR…TIQE), 458–494 (LESGKKKHANEILTVRNELEQSNAAHQSLRDQCSLLL), and 560–643 (ATIE…ETKR). Positions 61–64 (YSTL) match the LIR 1 motif. Residues 381–385 (DFKIL) form a required for interaction with lgg-1 region. The segment at 666 to 690 (EELDEEPKASTESEEKAEWEMVDEE) is disordered. Positions 671–684 (EPKASTESEEKAEW) are enriched in basic and acidic residues. An LIR 2 motif is present at residues 684 to 687 (WEMV).

Interacts with sepa-1. Interacts (via the LIR motifs) with lgg-1 and lgg-2. Shows strong interaction with lgg-1 and weak interaction with lgg-2.

Its subcellular location is the cytoplasm. In terms of biological role, involved in autophagy. Thought to act as an adapter protein that brings PGL granules to autophagic structures containing lgg-1. Association with other adapters such as sepa-1 is required for the accumulation and degradation of germ cell specific P-granules by autophagy in somatic cells. This ensures exclusive localization of the P-granules in germ cells. May also play a role in the removal of sepa-1 from somatic cells. In Caenorhabditis elegans, this protein is Ectopic P granules protein 2.